A 96-amino-acid polypeptide reads, in one-letter code: Large ribosomal subunit protein bL25 (96 aa).

Belongs to the bacterial ribosomal protein bL25 family. As to quaternary structure, part of the 50S ribosomal subunit; part of the 5S rRNA/L5/L18/L25 subcomplex. Contacts the 5S rRNA. Binds to the 5S rRNA independently of L5 and L18.

In terms of biological role, this is one of the proteins that binds to the 5S RNA in the ribosome where it forms part of the central protuberance. This is Large ribosomal subunit protein bL25 from Francisella philomiragia subsp. philomiragia (strain ATCC 25017 / CCUG 19701 / FSC 153 / O#319-036).